Reading from the N-terminus, the 184-residue chain is Coordinator of PRMT5 and differentiation stimulator (184 aa).

Met1 is subject to N-acetylmethionine. A compositionally biased stretch (low complexity) spans 1–14 (MDLQAAGAQAQGAA). The interval 1–136 (MDLQAAGAQA…PYDADDIQES (136 aa)) is disordered. Positions 42–56 (SSQERETEKAMDRLA) are enriched in basic and acidic residues. 2 positions are modified to phosphoserine: Ser66 and Ser75. Positions 78–89 (EGFAMDEEDSDG) are enriched in acidic residues.

In terms of assembly, interacts with PRMT5. Interacts with histone H4; specifically interacts with the N-terminus of histone H4 but not with histone H3. Interacts with CBFB. Found in a complex with PRMT5, RUNX1 and CBFB.

The protein resides in the nucleus. Histone-binding protein required for histone H4 methyltransferase activity of PRMT5. Specifically required for histone H4 'Arg-3' methylation mediated by PRMT5, but not histone H3 'Arg-8' methylation, suggesting that it modulates the substrate specificity of PRMT5. Specifically interacts with the N-terminus of histone H4 but not with histone H3, suggesting that it acts by promoting the association between histone H4 and PRMT5. Involved in CCNE1 promoter repression. Plays a role in muscle cell differentiation by modulating the recruitment of PRMT5 to the promoter of genes involved in the coordination between cell cycle exit and muscle differentiation. In Homo sapiens (Human), this protein is Coordinator of PRMT5 and differentiation stimulator (COPRS).